Reading from the N-terminus, the 82-residue chain is RNA-binding protein Hfq (82 aa).

Positions 10–70 constitute a Sm domain; the sequence is DTFLNHVRKN…ISTIMPAQPV (61 aa).

The protein belongs to the Hfq family. As to quaternary structure, homohexamer.

Functionally, RNA chaperone that binds small regulatory RNA (sRNAs) and mRNAs to facilitate mRNA translational regulation in response to envelope stress, environmental stress and changes in metabolite concentrations. Also binds with high specificity to tRNAs. The chain is RNA-binding protein Hfq from Parvibaculum lavamentivorans (strain DS-1 / DSM 13023 / NCIMB 13966).